Consider the following 411-residue polypeptide: Na(+)-translocating NADH-quinone reductase subunit B (411 aa).

3 helical membrane passes run 56 to 76 (MMIT…YNVG), 120 to 140 (ALGA…CTIW), and 166 to 186 (IVPP…GIIV). Position 233 is an FMN phosphoryl threonine (threonine 233). A run of 5 helical transmembrane segments spans residues 272 to 292 (VSTL…IAAW), 294 to 314 (IIAG…LIGS), 319 to 339 (MFSM…GMVF), 348 to 368 (SFTN…AVLI), and 378 to 398 (GMML…YIVV).

The protein belongs to the NqrB/RnfD family. Composed of six subunits; NqrA, NqrB, NqrC, NqrD, NqrE and NqrF. Requires FMN as cofactor.

Its subcellular location is the cell inner membrane. It catalyses the reaction a ubiquinone + n Na(+)(in) + NADH + H(+) = a ubiquinol + n Na(+)(out) + NAD(+). Functionally, NQR complex catalyzes the reduction of ubiquinone-1 to ubiquinol by two successive reactions, coupled with the transport of Na(+) ions from the cytoplasm to the periplasm. NqrA to NqrE are probably involved in the second step, the conversion of ubisemiquinone to ubiquinol. In Haemophilus influenzae (strain 86-028NP), this protein is Na(+)-translocating NADH-quinone reductase subunit B.